The sequence spans 103 residues: Co-chaperonin GroES (103 aa).

Belongs to the GroES chaperonin family. Heptamer of 7 subunits arranged in a ring. Interacts with the chaperonin GroEL.

It localises to the cytoplasm. Its function is as follows. Together with the chaperonin GroEL, plays an essential role in assisting protein folding. The GroEL-GroES system forms a nano-cage that allows encapsulation of the non-native substrate proteins and provides a physical environment optimized to promote and accelerate protein folding. GroES binds to the apical surface of the GroEL ring, thereby capping the opening of the GroEL channel. The polypeptide is Co-chaperonin GroES (Prochlorococcus marinus (strain MIT 9312)).